A 51-amino-acid chain; its full sequence is Sperm protamine P1 (51 aa).

Cystine bridges form between Cys7–Cys15 and Cys40–Cys48.

This sequence belongs to the protamine P1 family. In terms of assembly, cross-linked by interchain disulfide bonds around the DNA-helix. Post-translationally, phosphorylated by SRPK1. In terms of tissue distribution, testis.

It is found in the nucleus. The protein localises to the chromosome. Functionally, protamines substitute for histones in the chromatin of sperm during the haploid phase of spermatogenesis. They compact sperm DNA into a highly condensed, stable and inactive complex. This is Sperm protamine P1 (PRM1) from Bos taurus (Bovine).